The chain runs to 178 residues: FMN reductase (NADH) RutF (178 aa).

It belongs to the non-flavoprotein flavin reductase family. RutF subfamily.

The enzyme catalyses FMNH2 + NAD(+) = FMN + NADH + 2 H(+). Catalyzes the reduction of FMN to FMNH2 which is used to reduce pyrimidine by RutA via the Rut pathway. The sequence is that of FMN reductase (NADH) RutF from Pseudomonas syringae pv. syringae (strain B728a).